The primary structure comprises 185 residues: Threonylcarbamoyl-AMP synthase (185 aa).

The 181-residue stretch at Asn5–Arg185 folds into the YrdC-like domain.

This sequence belongs to the SUA5 family. TsaC subfamily.

Its subcellular location is the cytoplasm. The enzyme catalyses L-threonine + hydrogencarbonate + ATP = L-threonylcarbamoyladenylate + diphosphate + H2O. Functionally, required for the formation of a threonylcarbamoyl group on adenosine at position 37 (t(6)A37) in tRNAs that read codons beginning with adenine. Catalyzes the conversion of L-threonine, HCO(3)(-)/CO(2) and ATP to give threonylcarbamoyl-AMP (TC-AMP) as the acyladenylate intermediate, with the release of diphosphate. The protein is Threonylcarbamoyl-AMP synthase of Nitrosococcus oceani (strain ATCC 19707 / BCRC 17464 / JCM 30415 / NCIMB 11848 / C-107).